The primary structure comprises 447 residues: Argininosuccinate synthase (447 aa).

ATP-binding positions include 17–25 and Ala-43; that span reads AFSGGLDTS. Tyr-99 contributes to the L-citrulline binding site. Gly-129 and Thr-131 together coordinate ATP. 3 residues coordinate L-aspartate: Thr-131, Asn-135, and Asp-136. Asn-135 is an L-citrulline binding site. Residue Asp-136 participates in ATP binding. L-citrulline is bound by residues Arg-139 and Ser-192. Residue Asp-194 coordinates ATP. The L-citrulline site is built by Thr-201, Glu-203, and Glu-280.

It belongs to the argininosuccinate synthase family. Type 2 subfamily. As to quaternary structure, homotetramer.

The protein localises to the cytoplasm. It carries out the reaction L-citrulline + L-aspartate + ATP = 2-(N(omega)-L-arginino)succinate + AMP + diphosphate + H(+). The protein operates within amino-acid biosynthesis; L-arginine biosynthesis; L-arginine from L-ornithine and carbamoyl phosphate: step 2/3. In Shigella boydii serotype 18 (strain CDC 3083-94 / BS512), this protein is Argininosuccinate synthase.